We begin with the raw amino-acid sequence, 274 residues long: 2-dehydro-3-deoxyphosphooctonate aldolase (274 aa).

It belongs to the KdsA family.

It is found in the cytoplasm. It catalyses the reaction D-arabinose 5-phosphate + phosphoenolpyruvate + H2O = 3-deoxy-alpha-D-manno-2-octulosonate-8-phosphate + phosphate. It functions in the pathway carbohydrate biosynthesis; 3-deoxy-D-manno-octulosonate biosynthesis; 3-deoxy-D-manno-octulosonate from D-ribulose 5-phosphate: step 2/3. It participates in bacterial outer membrane biogenesis; lipopolysaccharide biosynthesis. The polypeptide is 2-dehydro-3-deoxyphosphooctonate aldolase (Rickettsia felis (strain ATCC VR-1525 / URRWXCal2) (Rickettsia azadi)).